The primary structure comprises 221 residues: Orotate phosphoribosyltransferase (221 aa).

K26 serves as a coordination point for 5-phospho-alpha-D-ribose 1-diphosphate. 34-35 (FF) provides a ligand contact to orotate. 5-phospho-alpha-D-ribose 1-diphosphate contacts are provided by residues 72–73 (YK), R99, K100, K103, H105, and 124–132 (DDVITAGTA). Orotate-binding residues include T128 and R156.

Belongs to the purine/pyrimidine phosphoribosyltransferase family. PyrE subfamily. Homodimer. The cofactor is Mg(2+).

It catalyses the reaction orotidine 5'-phosphate + diphosphate = orotate + 5-phospho-alpha-D-ribose 1-diphosphate. The protein operates within pyrimidine metabolism; UMP biosynthesis via de novo pathway; UMP from orotate: step 1/2. Catalyzes the transfer of a ribosyl phosphate group from 5-phosphoribose 1-diphosphate to orotate, leading to the formation of orotidine monophosphate (OMP). This Colwellia psychrerythraea (strain 34H / ATCC BAA-681) (Vibrio psychroerythus) protein is Orotate phosphoribosyltransferase.